The sequence spans 102 residues: N(4)-acetylcytidine amidohydrolase (102 aa).

Positions 6 to 92 (TFFGRFEADI…VIKAIYPGLD (87 aa)) constitute an ASCH domain. Lys20 serves as the catalytic Proton acceptor. The active-site Nucleophile is the Thr23. Residue Glu73 is the Proton donor of the active site.

It belongs to the N(4)-acetylcytidine amidohydrolase family.

The catalysed reaction is N(4)-acetylcytidine + H2O = cytidine + acetate + H(+). It catalyses the reaction N(4)-acetyl-2'-deoxycytidine + H2O = 2'-deoxycytidine + acetate + H(+). It carries out the reaction N(4)-acetylcytosine + H2O = cytosine + acetate + H(+). In terms of biological role, catalyzes the hydrolysis of N(4)-acetylcytidine (ac4C). In Yersinia pseudotuberculosis serotype O:1b (strain IP 31758), this protein is N(4)-acetylcytidine amidohydrolase.